Reading from the N-terminus, the 503-residue chain is Glutamate--tRNA ligase 1 (503 aa).

A 'HIGH' region motif is present at residues 17–27 (PSPTGFLHIGN). The 'KMSKS' region motif lies at 261 to 265 (KLSKR). Lysine 264 is a binding site for ATP.

Belongs to the class-I aminoacyl-tRNA synthetase family. Glutamate--tRNA ligase type 1 subfamily. In terms of assembly, monomer.

The protein localises to the cytoplasm. The catalysed reaction is tRNA(Glu) + L-glutamate + ATP = L-glutamyl-tRNA(Glu) + AMP + diphosphate. Its function is as follows. Catalyzes the attachment of glutamate to tRNA(Glu) in a two-step reaction: glutamate is first activated by ATP to form Glu-AMP and then transferred to the acceptor end of tRNA(Glu). In Levilactobacillus brevis (strain ATCC 367 / BCRC 12310 / CIP 105137 / JCM 1170 / LMG 11437 / NCIMB 947 / NCTC 947) (Lactobacillus brevis), this protein is Glutamate--tRNA ligase 1.